A 381-amino-acid chain; its full sequence is Cobalt-precorrin-5B C(1)-methyltransferase (381 aa).

The protein belongs to the CbiD family.

It catalyses the reaction Co-precorrin-5B + S-adenosyl-L-methionine = Co-precorrin-6A + S-adenosyl-L-homocysteine. The protein operates within cofactor biosynthesis; adenosylcobalamin biosynthesis; cob(II)yrinate a,c-diamide from sirohydrochlorin (anaerobic route): step 6/10. Catalyzes the methylation of C-1 in cobalt-precorrin-5B to form cobalt-precorrin-6A. This is Cobalt-precorrin-5B C(1)-methyltransferase from Methylococcus capsulatus (strain ATCC 33009 / NCIMB 11132 / Bath).